The sequence spans 434 residues: Ribosomal protein uS12 methylthiotransferase RimO (434 aa).

One can recognise an MTTase N-terminal domain in the interval 6-122 (NRVFLLSLGC…ILTAIGARYR (117 aa)). Residues Cys15, Cys51, Cys85, Cys146, Cys150, and Cys153 each coordinate [4Fe-4S] cluster. Residues 132–361 (TAPGHTSFLK…MELQEGISEE (230 aa)) form the Radical SAM core domain. In terms of domain architecture, TRAM spans 364–431 (KRLEGREIAV…PYELFGTVLK (68 aa)).

The protein belongs to the methylthiotransferase family. RimO subfamily. [4Fe-4S] cluster serves as cofactor.

The protein resides in the cytoplasm. It catalyses the reaction L-aspartate(89)-[ribosomal protein uS12]-hydrogen + (sulfur carrier)-SH + AH2 + 2 S-adenosyl-L-methionine = 3-methylsulfanyl-L-aspartate(89)-[ribosomal protein uS12]-hydrogen + (sulfur carrier)-H + 5'-deoxyadenosine + L-methionine + A + S-adenosyl-L-homocysteine + 2 H(+). Its function is as follows. Catalyzes the methylthiolation of an aspartic acid residue of ribosomal protein uS12. The chain is Ribosomal protein uS12 methylthiotransferase RimO from Chlorobium phaeovibrioides (strain DSM 265 / 1930) (Prosthecochloris vibrioformis (strain DSM 265)).